A 274-amino-acid polypeptide reads, in one-letter code: Beta-lysine N(6)-acetyltransferase (274 aa).

Residues 123–274 enclose the N-acetyltransferase domain; it reads FHLKIANETD…DMNFWYKLSE (152 aa).

Belongs to the acetyltransferase family.

It carries out the reaction (3S)-3,6-diaminohexanoate + acetyl-CoA = (3S)-6-acetamido-3-aminohexanoate + CoA + H(+). In terms of biological role, catalyzes the acetylation of beta-lysine to N6-acetyl-beta-lysine, a compatible solute produced by methanogenic archaea that helps cells to cope with salt stress. The protein is Beta-lysine N(6)-acetyltransferase of Methanococcus maripaludis (strain DSM 14266 / JCM 13030 / NBRC 101832 / S2 / LL).